Reading from the N-terminus, the 383-residue chain is Probable butyrate kinase (383 aa).

It belongs to the acetokinase family.

It is found in the cytoplasm. The catalysed reaction is butanoate + ATP = butanoyl phosphate + ADP. The chain is Probable butyrate kinase from Deinococcus radiodurans (strain ATCC 13939 / DSM 20539 / JCM 16871 / CCUG 27074 / LMG 4051 / NBRC 15346 / NCIMB 9279 / VKM B-1422 / R1).